A 1056-amino-acid polypeptide reads, in one-letter code: Carbamoyl phosphate synthase large chain (1056 aa).

The interval 1-399 (MKIDVSKVIV…AFQKAIRMLD (399 aa)) is carboxyphosphate synthetic domain. Residues Arg-127, Arg-167, Gly-173, Gly-174, Lys-206, Leu-208, Glu-213, Gly-239, Val-240, His-241, Gln-282, and Glu-296 each contribute to the ATP site. Residues 131–325 (QKTMKKVGLP…LAYIATKLAI (195 aa)) enclose the ATP-grasp 1 domain. Positions 282, 296, and 298 each coordinate Mg(2+). The Mn(2+) site is built by Gln-282, Glu-296, and Asn-298. The oligomerization domain stretch occupies residues 400–536 (IGDELIGKYY…VTYDGVENDI (137 aa)). Positions 537–919 (PKPKKPSILV…LKSWLSVKPN (383 aa)) are carbamoyl phosphate synthetic domain. Residues 661 to 849 (SKLLEKLGIP…LMELSAQAVL (189 aa)) form the ATP-grasp 2 domain. Arg-697, Lys-736, Ile-738, Glu-742, Gly-766, Val-767, His-768, Ser-769, Gln-809, and Glu-820 together coordinate ATP. 3 residues coordinate Mg(2+): Gln-809, Glu-820, and Asn-822. Gln-809, Glu-820, and Asn-822 together coordinate Mn(2+). In terms of domain architecture, MGS-like spans 915–1043 (SVKPNELPKT…REYWIRKIEE (129 aa)). The segment at 920-1056 (ELPKTSALIY…EYAASVVLRR (137 aa)) is allosteric domain.

This sequence belongs to the CarB family. In terms of assembly, composed of two chains; the small (or glutamine) chain promotes the hydrolysis of glutamine to ammonia, which is used by the large (or ammonia) chain to synthesize carbamoyl phosphate. Tetramer of heterodimers (alpha,beta)4. Requires Mg(2+) as cofactor. Mn(2+) is required as a cofactor.

It catalyses the reaction hydrogencarbonate + L-glutamine + 2 ATP + H2O = carbamoyl phosphate + L-glutamate + 2 ADP + phosphate + 2 H(+). It carries out the reaction hydrogencarbonate + NH4(+) + 2 ATP = carbamoyl phosphate + 2 ADP + phosphate + 2 H(+). The protein operates within amino-acid biosynthesis; L-arginine biosynthesis; carbamoyl phosphate from bicarbonate: step 1/1. Its pathway is pyrimidine metabolism; UMP biosynthesis via de novo pathway; (S)-dihydroorotate from bicarbonate: step 1/3. Its function is as follows. Large subunit of the glutamine-dependent carbamoyl phosphate synthetase (CPSase). CPSase catalyzes the formation of carbamoyl phosphate from the ammonia moiety of glutamine, carbonate, and phosphate donated by ATP, constituting the first step of 2 biosynthetic pathways, one leading to arginine and/or urea and the other to pyrimidine nucleotides. The large subunit (synthetase) binds the substrates ammonia (free or transferred from glutamine from the small subunit), hydrogencarbonate and ATP and carries out an ATP-coupled ligase reaction, activating hydrogencarbonate by forming carboxy phosphate which reacts with ammonia to form carbamoyl phosphate. The polypeptide is Carbamoyl phosphate synthase large chain (Pyrococcus furiosus (strain ATCC 43587 / DSM 3638 / JCM 8422 / Vc1)).